Reading from the N-terminus, the 143-residue chain is Small ribosomal subunit protein uS12 (143 aa).

Positions 1-20 (MGKPRGLRTARKHRSHRRDQ) are enriched in basic residues. The segment at 1 to 26 (MGKPRGLRTARKHRSHRRDQRWHDKD) is disordered. At Pro-62 the chain carries Hydroxyproline.

Belongs to the universal ribosomal protein uS12 family. Component of the 40S small ribosomal subunit.

The protein localises to the cytoplasm. The protein resides in the cytosol. It localises to the rough endoplasmic reticulum. This is Small ribosomal subunit protein uS12 (RpS23) from Dermacentor variabilis (American dog tick).